The chain runs to 635 residues: Extracellular metalloproteinase MEP (635 aa).

A signal peptide spans 1 to 19 (MRAFLLASLASLPAVNVYA). Positions 20-244 (HPTHNSRGLT…VHAVVDYAAE (225 aa)) are excised as a propeptide. N-linked (GlcNAc...) asparagine glycosylation is found at Asn-287, Asn-302, and Asn-336. His-429 contacts Zn(2+). Residue Glu-430 is part of the active site. Zn(2+) is bound at residue His-433.

This sequence belongs to the peptidase M36 family. Zn(2+) serves as cofactor.

The protein localises to the secreted. Its function is as follows. Secreted metalloproteinase that allows assimilation of proteinaceous substrates. The sequence is that of Extracellular metalloproteinase MEP (MEP) from Leptosphaeria maculans (strain JN3 / isolate v23.1.3 / race Av1-4-5-6-7-8) (Blackleg fungus).